The following is a 362-amino-acid chain: Mortality factor 4-like protein 1 (362 aa).

The 40-residue stretch at 12–51 (QEGERVLCFHGPLLYEAKCVKVAIKDKQVKYFIHYSGWNK) folds into the Tudor-knot domain. Positions 26 to 62 (YEAKCVKVAIKDKQVKYFIHYSGWNKKSAVRPRRSEK) are interaction with KAT8. Residues 113 to 182 (RELQKANQEQ…RKKRARVDPT (70 aa)) form a disordered region. Residues 133–266 (PGKKTSGLQQ…VAGIKEYFNV (134 aa)) form a sufficient for interaction with SIN3A region. Positions 135–146 (KKTSGLQQKNVE) match the Nuclear localization signal motif. An N6-acetyllysine modification is found at Lys-143. The interaction with RB1-1 stretch occupies residues 164 to 230 (STSETPQPPR…FYLPAKKNVD (67 aa)). The interval 188–342 (TFMNRVEVKV…FLKYLAKNSA (155 aa)) is sufficient for interaction with PHF12. Residues 191–362 (NRVEVKVKIP…APPEYHRKAV (172 aa)) form the MRG domain. The tract at residues 323 to 344 (LALLLNYLHDFLKYLAKNSATL) is interaction with RB1-2.

Component of the NuA4 histone acetyltransferase complex which contains the catalytic subunit KAT5/TIP60 and the subunits EP400, TRRAP/PAF400, BRD8/SMAP, EPC1, DMAP1/DNMAP1, RUVBL1/TIP49, RUVBL2, ING3, actin, ACTL6A/BAF53A, MORF4L1/MRG15, MORF4L2/MRGX, MRGBP, YEATS4/GAS41, VPS72/YL1 and MEAF6. The NuA4 complex interacts with MYC and the adenovirus E1A protein. MORF4L1 may also participate in the formation of NuA4 related complexes which lack the KAT5/TIP60 catalytic subunit, but which include the SWI/SNF related protein SRCAP. Component of the mSin3A histone deacetylase complex, which includes SIN3A, HDAC2, ARID4B, MORF4L1, RBBP4/RbAp48, and RBBP7/RbAp46. May also interact with PHF12 and one or more as yet undefined members of the TLE (transducin-like enhancer of split) family of transcriptional repressors. Component of the SIN3B complex, which includes SIN3B, HDAC2 or HDAC1, PHF12 and MORF4L1. Interacts with RB1 and KAT8. Interacts with the N-terminus of MRFAP1. Found in a complex composed of MORF4L1, MRFAP1 and RB1. Interacts with the entire BRCA complex, which contains BRCA1, PALB2, BRCA2 and RAD51. Interacts with PALB2. Forms a complex with MSL1 and NUPR1.

Its subcellular location is the nucleus. Component of the NuA4 histone acetyltransferase (HAT) complex which is involved in transcriptional activation of select genes principally by acetylation of nucleosomal histones H4 and H2A. This modification may both alter nucleosome - DNA interactions and promote interaction of the modified histones with other proteins which positively regulate transcription. This complex may be required for the activation of transcriptional programs associated with oncogene and proto-oncogene mediated growth induction, tumor suppressor mediated growth arrest and replicative senescence, apoptosis, and DNA repair. The NuA4 complex ATPase and helicase activities seem to be, at least in part, contributed by the association of RUVBL1 and RUVBL2 with EP400. NuA4 may also play a direct role in DNA repair when directly recruited to sites of DNA damage. As part of the SIN3B complex represses transcription and counteracts the histone acetyltransferase activity of EP300 through the recognition H3K27ac marks by PHF12 and the activity of the histone deacetylase HDAC2. SIN3B complex is recruited downstream of the constitutively active genes transcriptional start sites through interaction with histones and mitigates histone acetylation and RNA polymerase II progression within transcribed regions contributing to the regulation of transcription. Required for homologous recombination repair (HRR) and resistance to mitomycin C (MMC). Involved in the localization of PALB2, BRCA2 and RAD51, but not BRCA1, to DNA-damage foci. The polypeptide is Mortality factor 4-like protein 1 (Homo sapiens (Human)).